Here is a 160-residue protein sequence, read N- to C-terminus: MSEASRLCSGYYSLNQSFVEPFQCPRRGEGAALQYCCGFADLKYCCSEPGSYFPYKHSYMWSLSIGALIGLGIAALVLLAFVISVCVLCYLFLYTKPQRLDTGLKLQHLEASSTQEGKSNGKTKALNSNAASNATNETYYEADDIIQEKTMDATQIHIAY.

The chain crosses the membrane as a helical span at residues 65–85 (IGALIGLGIAALVLLAFVISV).

This sequence belongs to the shisa family.

The protein resides in the membrane. This is Protein shisa-like-2B from Homo sapiens (Human).